The chain runs to 158 residues: Large ribosomal subunit protein bL21 (158 aa).

Residues serine 106–aspartate 158 form a disordered region. Over residues proline 115 to threonine 143 the composition is skewed to basic and acidic residues. Low complexity predominate over residues glutamine 146 to aspartate 158.

The protein belongs to the bacterial ribosomal protein bL21 family. As to quaternary structure, part of the 50S ribosomal subunit. Contacts protein L20.

Its function is as follows. This protein binds to 23S rRNA in the presence of protein L20. In Bartonella tribocorum (strain CIP 105476 / IBS 506), this protein is Large ribosomal subunit protein bL21.